Reading from the N-terminus, the 79-residue chain is Conotoxin TsMSGL-2 (79 aa).

The N-terminal stretch at 1 to 24 (MSGLGIMVLTLLLLVFMATSHQDA) is a signal peptide. Positions 25–46 (GEKQATQRDAVNVRRRRSIAGR) are excised as a propeptide. 3 cysteine pairs are disulfide-bonded: C52-C64, C56-C73, and C63-C77. Residue L78 is modified to Leucine amide.

The protein belongs to the conotoxin O3 superfamily. Expressed by the venom duct.

It localises to the secreted. The polypeptide is Conotoxin TsMSGL-2 (Conus tessulatus (Tessellate cone)).